Reading from the N-terminus, the 332-residue chain is NADH-quinone oxidoreductase subunit H (332 aa).

The next 9 membrane-spanning stretches (helical) occupy residues 4–24, 44–64, 78–98, 120–140, 165–185, 194–214, 255–275, 279–299, and 312–332; these read FAFF…IFAS, IGPD…MIKL, FIFA…LAAI, VALL…FLGG, VGAL…LVDI, FSWL…ALFI, IAGA…FWII, IMMI…RAAF, and YLIL…AVLL.

The protein belongs to the complex I subunit 1 family. In terms of assembly, NDH-1 is composed of 14 different subunits. Subunits NuoA, H, J, K, L, M, N constitute the membrane sector of the complex.

The protein localises to the cell inner membrane. It catalyses the reaction a quinone + NADH + 5 H(+)(in) = a quinol + NAD(+) + 4 H(+)(out). NDH-1 shuttles electrons from NADH, via FMN and iron-sulfur (Fe-S) centers, to quinones in the respiratory chain. The immediate electron acceptor for the enzyme in this species is believed to be ubiquinone. Couples the redox reaction to proton translocation (for every two electrons transferred, four hydrogen ions are translocated across the cytoplasmic membrane), and thus conserves the redox energy in a proton gradient. This subunit may bind ubiquinone. This Campylobacter jejuni subsp. jejuni serotype O:6 (strain 81116 / NCTC 11828) protein is NADH-quinone oxidoreductase subunit H.